A 62-amino-acid polypeptide reads, in one-letter code: Fungus-induced protein 1 (62 aa).

A signal peptide spans 1–22 (MSQNLFQILLIFAILAALQVQG).

In Caenorhabditis briggsae, this protein is Fungus-induced protein 1.